A 418-amino-acid chain; its full sequence is 3-phosphoshikimate 1-carboxyvinyltransferase (418 aa).

Positions 26, 27, and 31 each coordinate 3-phosphoshikimate. A phosphoenolpyruvate-binding site is contributed by lysine 26. Phosphoenolpyruvate-binding residues include glycine 97 and arginine 125. The 3-phosphoshikimate site is built by serine 170, serine 171, glutamine 172, aspartate 297, asparagine 320, and lysine 324. Glutamine 172 contributes to the phosphoenolpyruvate binding site. Aspartate 297 (proton acceptor) is an active-site residue. Positions 328, 375, and 400 each coordinate phosphoenolpyruvate.

Belongs to the EPSP synthase family. As to quaternary structure, monomer.

Its subcellular location is the cytoplasm. It carries out the reaction 3-phosphoshikimate + phosphoenolpyruvate = 5-O-(1-carboxyvinyl)-3-phosphoshikimate + phosphate. It functions in the pathway metabolic intermediate biosynthesis; chorismate biosynthesis; chorismate from D-erythrose 4-phosphate and phosphoenolpyruvate: step 6/7. Functionally, catalyzes the transfer of the enolpyruvyl moiety of phosphoenolpyruvate (PEP) to the 5-hydroxyl of shikimate-3-phosphate (S3P) to produce enolpyruvyl shikimate-3-phosphate and inorganic phosphate. The sequence is that of 3-phosphoshikimate 1-carboxyvinyltransferase from Pseudomonas savastanoi pv. phaseolicola (strain 1448A / Race 6) (Pseudomonas syringae pv. phaseolicola (strain 1448A / Race 6)).